A 20-amino-acid polypeptide reads, in one-letter code: TVKVTVTGAAGQIGYALLFR.

8 to 14 is an NAD(+) binding site; it reads GAAGQIG.

Belongs to the LDH/MDH superfamily. MDH type 2 family.

It carries out the reaction (S)-malate + NAD(+) = oxaloacetate + NADH + H(+). Catalyzes the reversible oxidation of malate to oxaloacetate. This is Malate dehydrogenase (mdh) from Microtetraspora glauca.